A 203-amino-acid polypeptide reads, in one-letter code: Small ribosomal subunit protein uS7 (203 aa).

The segment at 1–21 is disordered; sequence MSSEAPEPDAPASTDDERVSA.

The protein belongs to the universal ribosomal protein uS7 family. As to quaternary structure, part of the 30S ribosomal subunit.

Functionally, one of the primary rRNA binding proteins, it binds directly to 16S rRNA where it nucleates assembly of the head domain of the 30S subunit. Is located at the subunit interface close to the decoding center. This Natronomonas pharaonis (strain ATCC 35678 / DSM 2160 / CIP 103997 / JCM 8858 / NBRC 14720 / NCIMB 2260 / Gabara) (Halobacterium pharaonis) protein is Small ribosomal subunit protein uS7.